The sequence spans 1938 residues: Myosin-1 (1938 aa).

Residues 33–82 (DAKTSVFVADPKESFVKATVQSREGGKVTAKTEAGATVTVKEDQCFPMNP) form the Myosin N-terminal SH3-like domain. Phosphothreonine occurs at positions 64 and 69. A Myosin motor domain is found at 86 to 781 (DKIEDMAMMT…LLGLLEEMRD (696 aa)). K130 is modified (N6,N6,N6-trimethyllysine). 179–186 (GESGAGKT) is a binding site for ATP. Y389 carries the phosphotyrosine modification. T419 is modified (phosphothreonine). A Phosphotyrosine modification is found at Y424. Residue S625 is modified to Phosphoserine. The actin-binding stretch occupies residues 658-680 (LNKLMTNLRSTHPHFVRCIIPNE). H756 is subject to Pros-methylhistidine. An actin-binding region spans residues 760–774 (KFGHTKVFFKAGLLG). In terms of domain architecture, IQ spans 784–813 (LAQIITRTQARCRGFLARVEYQRMVERRES). The stretch at 842 to 1938 (LLKSAETEKE…EVHTKIISEE (1097 aa)) forms a coiled coil. S1091 and S1095 each carry phosphoserine. 2 disordered regions span residues 1124 to 1146 (EIEAERASRAKAEKQRSDLSREL) and 1152 to 1171 (RLEEAGGATSAQIEMNKKRE). Residues 1127–1146 (AERASRAKAEKQRSDLSREL) show a composition bias toward basic and acidic residues. Phosphoserine occurs at positions 1161 and 1236. T1240 carries the post-translational modification Phosphothreonine. S1242 carries the post-translational modification Phosphoserine. A Phosphothreonine modification is found at T1254. Residue S1260 is modified to Phosphoserine. T1285 is modified (phosphothreonine). Residues S1291, S1302, and S1305 each carry the phosphoserine modification. Y1463 carries the phosphotyrosine modification. Phosphothreonine is present on T1466. Position 1473 is a phosphoserine (S1473). Y1491 is subject to Phosphotyrosine. The residue at position 1494 (S1494) is a Phosphoserine. A Phosphothreonine modification is found at T1500. S1513 is modified (phosphoserine). T1516 carries the phosphothreonine modification. 5 positions are modified to phosphoserine: S1541, S1553, S1573, S1713, and S1725. T1729 and T1735 each carry phosphothreonine. The residue at position 1738 (S1738) is a Phosphoserine.

Belongs to the TRAFAC class myosin-kinesin ATPase superfamily. Myosin family. In terms of assembly, muscle myosin is a hexameric protein that consists of 2 heavy chain subunits (MHC), 2 alkali light chain subunits (MLC) and 2 regulatory light chain subunits (MLC-2). Interacts with SLC26A5.

The protein resides in the cytoplasm. It localises to the myofibril. Required for normal hearing. It plays a role in cochlear amplification of auditory stimuli, likely through the positive regulation of prestin (SLC26A5) activity and outer hair cell (OHC) electromotility. The chain is Myosin-1 (MYH1) from Equus caballus (Horse).